The following is a 171-amino-acid chain: 3-hydroxydecanoyl-[acyl-carrier-protein] dehydratase (171 aa).

His-71 is an active-site residue.

This sequence belongs to the thioester dehydratase family. FabA subfamily. As to quaternary structure, homodimer.

It localises to the cytoplasm. The catalysed reaction is a (3R)-hydroxyacyl-[ACP] = a (2E)-enoyl-[ACP] + H2O. The enzyme catalyses (3R)-hydroxydecanoyl-[ACP] = (2E)-decenoyl-[ACP] + H2O. It carries out the reaction (2E)-decenoyl-[ACP] = (3Z)-decenoyl-[ACP]. Its pathway is lipid metabolism; fatty acid biosynthesis. Necessary for the introduction of cis unsaturation into fatty acids. Catalyzes the dehydration of (3R)-3-hydroxydecanoyl-ACP to E-(2)-decenoyl-ACP and then its isomerization to Z-(3)-decenoyl-ACP. Can catalyze the dehydratase reaction for beta-hydroxyacyl-ACPs with saturated chain lengths up to 16:0, being most active on intermediate chain length. This is 3-hydroxydecanoyl-[acyl-carrier-protein] dehydratase from Rhizobium meliloti (strain 1021) (Ensifer meliloti).